Consider the following 89-residue polypeptide: MSRSLKKGPYINLKLEKKVLAMNESGKKAVIKTWARASMISPDFVGHTIAVHNGNKFIPVFVTENMVGHKLGEFSPTRTFRGHAGNKKK.

It belongs to the universal ribosomal protein uS19 family.

In terms of biological role, protein S19 forms a complex with S13 that binds strongly to the 16S ribosomal RNA. This Porphyromonas gingivalis (strain ATCC 33277 / DSM 20709 / CIP 103683 / JCM 12257 / NCTC 11834 / 2561) protein is Small ribosomal subunit protein uS19.